The following is a 56-amino-acid chain: UPF0434 protein CBUD_1597.1 (56 aa).

It belongs to the UPF0434 family.

The chain is UPF0434 protein CBUD_1597.1 from Coxiella burnetii (strain Dugway 5J108-111).